The sequence spans 144 residues: Na(+)/H(+) antiporter subunit B (144 aa).

4 helical membrane-spanning segments follow: residues 9-31, 41-58, 75-97, and 117-139; these read VLLH…YLFF, FIGG…YLGF, IAFG…DPYL, and ALPF…ILTI.

It belongs to the CPA3 antiporters (TC 2.A.63) subunit B family. As to quaternary structure, forms a heterooligomeric complex that consists of seven subunits: MrpA, MrpB, MrpC, MrpD, MrpE, MrpF and MrpG.

The protein resides in the cell membrane. In terms of biological role, mnh complex is a Na(+)Li(+)/H(+) antiporter involved in Na(+) and/or Li(+) excretion and Na(+) resistance. Na(+)/H(+) antiport consumes a transmembrane electrical potential, and is thus inferred to be electrogenic. Does not transport K(+), Ca(2+) or Mg(2+). In Alkalihalophilus pseudofirmus (strain ATCC BAA-2126 / JCM 17055 / OF4) (Bacillus pseudofirmus), this protein is Na(+)/H(+) antiporter subunit B (mrpB).